The primary structure comprises 629 residues: DNA mismatch repair protein MutL (629 aa).

Belongs to the DNA mismatch repair MutL/HexB family.

This protein is involved in the repair of mismatches in DNA. It is required for dam-dependent methyl-directed DNA mismatch repair. May act as a 'molecular matchmaker', a protein that promotes the formation of a stable complex between two or more DNA-binding proteins in an ATP-dependent manner without itself being part of a final effector complex. The sequence is that of DNA mismatch repair protein MutL from Haemophilus influenzae (strain 86-028NP).